Reading from the N-terminus, the 373-residue chain is Leucine aminopeptidase 1 (373 aa).

The N-terminal stretch at 1–18 (MKFISVLALGATATSVLG) is a signal peptide. Zn(2+) is bound by residues histidine 176 and aspartate 195. Residue asparagine 196 is glycosylated (N-linked (GlcNAc...) asparagine). Zn(2+)-binding residues include glutamate 234 and aspartate 261. A glycan (N-linked (GlcNAc...) asparagine) is linked at asparagine 286. A disulfide bond links cysteine 310 and cysteine 314. Histidine 343 is a Zn(2+) binding site.

It belongs to the peptidase M28 family. M28E subfamily. Monomer. The cofactor is Zn(2+).

It is found in the secreted. Extracellular aminopeptidase which contributes to pathogenicity. The protein is Leucine aminopeptidase 1 (LAP1) of Arthroderma otae (strain ATCC MYA-4605 / CBS 113480) (Microsporum canis).